A 347-amino-acid polypeptide reads, in one-letter code: KRR1 small subunit processome component homolog (347 aa).

Residues 124 to 194 (GCDIIKIGNL…VRDIVLETMN (71 aa)) enclose the KH domain. The segment covering 231–246 (NKNLSKRKQPKVKKPK) has biased composition (basic residues). The disordered stretch occupies residues 231 to 347 (NKNLSKRKQP…LLKANKKSKS (117 aa)). A coiled-coil region spans residues 271–304 (FLNKEQKQAKRQQERQTKQAEAAKKQDERRNKDF). 2 stretches are compositionally biased toward basic and acidic residues: residues 272 to 303 (LNKE…RNKD) and 318 to 329 (KANDNDSSDSRV). Basic residues predominate over residues 337–347 (KLLKANKKSKS).

Belongs to the KRR1 family. As to quaternary structure, monomer. Component of the ribosomal small subunit (SSU) processome.

It is found in the nucleus. Its subcellular location is the nucleolus. Its function is as follows. Required for 40S ribosome biogenesis. Involved in nucleolar processing of pre-18S ribosomal RNA and ribosome assembly. Binds to RNA. Required for female germline development, cell viability during eye development and for survival of dividing cells and epithelial cells during early wing disk development. The chain is KRR1 small subunit processome component homolog from Drosophila willistoni (Fruit fly).